A 182-amino-acid polypeptide reads, in one-letter code: Ribosome maturation factor RimM (182 aa).

The 81-residue stretch at 102-182 (EEGDYYWKDL…SIEVDWDPGF (81 aa)) folds into the PRC barrel domain.

This sequence belongs to the RimM family. Binds ribosomal protein uS19.

The protein localises to the cytoplasm. An accessory protein needed during the final step in the assembly of 30S ribosomal subunit, possibly for assembly of the head region. Essential for efficient processing of 16S rRNA. May be needed both before and after RbfA during the maturation of 16S rRNA. It has affinity for free ribosomal 30S subunits but not for 70S ribosomes. This chain is Ribosome maturation factor RimM, found in Escherichia fergusonii (strain ATCC 35469 / DSM 13698 / CCUG 18766 / IAM 14443 / JCM 21226 / LMG 7866 / NBRC 102419 / NCTC 12128 / CDC 0568-73).